The sequence spans 222 residues: Superoxide dismutase [Mn], mitochondrial (222 aa).

Residues 1 to 24 (MLSRAVCGTGRQLAPALGYLGSRQ) constitute a mitochondrion transit peptide. Residue histidine 50 participates in Mn(2+) binding. 3'-nitrotyrosine is present on tyrosine 58. Residues lysine 68 and lysine 75 each carry the N6-acetyllysine; alternate modification. 2 positions are modified to N6-succinyllysine; alternate: lysine 68 and lysine 75. Residue histidine 98 coordinates Mn(2+). An N6-acetyllysine modification is found at lysine 114. Residues lysine 122 and lysine 130 each carry the N6-acetyllysine; alternate modification. N6-succinyllysine; alternate occurs at positions 122 and 130. Aspartate 183 and histidine 187 together coordinate Mn(2+). Lysine 202 carries the N6-acetyllysine modification.

Belongs to the iron/manganese superoxide dismutase family. Homotetramer. Mn(2+) serves as cofactor. Nitrated under oxidative stress. Nitration coupled with oxidation inhibits the catalytic activity. Post-translationally, acetylation at Lys-122 decreases enzymatic activity. Deacetylated by SIRT3 upon exposure to ionizing radiations or after long fasting. In terms of processing, polyubiquitinated; leading to proteasomal degradation. Deubiquitinated by USP36 which increases protein stability.

It is found in the mitochondrion matrix. It catalyses the reaction 2 superoxide + 2 H(+) = H2O2 + O2. Functionally, destroys superoxide anion radicals which are normally produced within the cells and which are toxic to biological systems. The sequence is that of Superoxide dismutase [Mn], mitochondrial (SOD2) from Macaca nemestrina (Pig-tailed macaque).